The primary structure comprises 216 residues: DNA gyrase subunit B (216 aa).

The 77-residue stretch at 140 to 216 (SELYLVEGDS…PDKLRYHKII (77 aa)) folds into the Toprim domain.

The protein belongs to the type II topoisomerase GyrB family. Heterotetramer, composed of two GyrA and two GyrB chains. In the heterotetramer, GyrA contains the active site tyrosine that forms a transient covalent intermediate with DNA, while GyrB binds cofactors and catalyzes ATP hydrolysis.

The protein resides in the cytoplasm. It carries out the reaction ATP-dependent breakage, passage and rejoining of double-stranded DNA.. A type II topoisomerase that negatively supercoils closed circular double-stranded (ds) DNA in an ATP-dependent manner to modulate DNA topology and maintain chromosomes in an underwound state. Negative supercoiling favors strand separation, and DNA replication, transcription, recombination and repair, all of which involve strand separation. Also able to catalyze the interconversion of other topological isomers of dsDNA rings, including catenanes and knotted rings. Type II topoisomerases break and join 2 DNA strands simultaneously in an ATP-dependent manner. The sequence is that of DNA gyrase subunit B (gyrB) from Acinetobacter venetianus (strain ATCC 31012 / DSM 23050 / BCRC 14357 / CCUG 45561 / CIP 110063 / KCTC 2702 / LMG 19082 / RAG-1).